Reading from the N-terminus, the 422-residue chain is RNA exonuclease 4 (422 aa).

The interval 1-194 is disordered; that stretch reads MGKAKVPASK…APAPPTEEDI (194 aa). A Phosphoserine modification is found at Ser-15. Residues 26-40 show a composition bias toward basic residues; it reads LTRKKNKKKKRFWKS. Ser-96 and Ser-111 each carry phosphoserine. Composition is skewed to basic and acidic residues over residues 106-127 and 151-176; these read NKKE…DQEA and GTEH…DIEH. Lys-115 is covalently cross-linked (Glycyl lysine isopeptide (Lys-Gly) (interchain with G-Cter in SUMO2)). Residues 243-394 form the Exonuclease domain; sequence ALALDCEMVG…QDAQAAMRLY (152 aa).

Belongs to the REXO4 family. As to quaternary structure, can bind ESR1 and ESR2. This interaction is abrogated by estrogen and augmented by tamoxifen treatment.

Its subcellular location is the nucleus. The protein resides in the nucleolus. The sequence is that of RNA exonuclease 4 (REXO4) from Homo sapiens (Human).